The chain runs to 741 residues: Pentatricopeptide repeat-containing protein At3g58590 (741 aa).

PPR repeat units follow at residues 48 to 78, 79 to 113, 114 to 146, 148 to 178, 179 to 213, 214 to 248, 249 to 279, 280 to 314, 315 to 349, 350 to 380, 381 to 414, 415 to 445, 446 to 481, 483 to 508, 509 to 543, 544 to 578, 580 to 610, 611 to 645, 646 to 680, and 681 to 715; these read PVYV…MPER, NKVS…GYLP, NQST…GLFM, DAFV…MPFK, SLET…GASL, TESS…GLDC, EISV…AGSW, DIVS…GFSP, NQGT…GCET, GIVL…IRDK, NIVC…GFRP, TEYT…GYED, NDYV…SVVP, NIVA…LEQP, DTVS…NIRP, DKYT…DFSC, DTFV…TREK, NLIT…GFKP, DRVS…GVEP, and EMDH…ADAP.

The protein belongs to the PPR family. P subfamily.

The protein is Pentatricopeptide repeat-containing protein At3g58590 of Arabidopsis thaliana (Mouse-ear cress).